The chain runs to 142 residues: Neuritin (142 aa).

Residues 1 to 27 (MGLKLNGRYISLILAVQIAYLVQAVRA) form the signal peptide. Residue G116 is the site of GPI-anchor amidated glycine attachment. The propeptide at 117–142 (AAGSLLPAFPVLLVSLSAALATWLSF) is removed in mature form.

The protein belongs to the neuritin family. Component of the outer core of AMPAR complex. AMPAR complex consists of an inner core made of 4 pore-forming GluA/GRIA proteins (GRIA1, GRIA2, GRIA3 and GRIA4) and 4 major auxiliary subunits arranged in a twofold symmetry. One of the two pairs of distinct binding sites is occupied either by CNIH2, CNIH3 or CACNG2, CACNG3. The other harbors CACNG2, CACNG3, CACNG4, CACNG8 or GSG1L. This inner core of AMPAR complex is complemented by outer core constituents binding directly to the GluA/GRIA proteins at sites distinct from the interaction sites of the inner core constituents. Outer core constituents include at least PRRT1, PRRT2, CKAMP44/SHISA9, FRRS1L and NRN1. The proteins of the inner and outer core serve as a platform for other, more peripherally associated AMPAR constituents. Alone or in combination, these auxiliary subunits control the gating and pharmacology of the AMPAR complex and profoundly impact their biogenesis and protein processing.

It is found in the cell membrane. Its subcellular location is the synapse. Functionally, promotes neurite outgrowth and especially branching of neuritic processes in primary hippocampal and cortical cells. The chain is Neuritin (NRN1) from Homo sapiens (Human).